Reading from the N-terminus, the 431-residue chain is Argininosuccinate lyase (431 aa).

Belongs to the lyase 1 family. Argininosuccinate lyase subfamily.

The protein localises to the cytoplasm. It carries out the reaction 2-(N(omega)-L-arginino)succinate = fumarate + L-arginine. The protein operates within amino-acid biosynthesis; L-arginine biosynthesis; L-arginine from L-ornithine and carbamoyl phosphate: step 3/3. The sequence is that of Argininosuccinate lyase from Xanthomonas oryzae pv. oryzae (strain MAFF 311018).